The sequence spans 370 residues: MAAPARTPRSRILGCSSMLRFLRNLVGSKGGSKSTNKPLTRSQPSSSWEQDVVSPMMGHQGGRGRKEPRAKVHSAASSNGKREPPPRVLSAAPSNPRHDAFELGTGDSGSQTLTSKDVPKLRAQGVEVTSVPLRGTWEVLEQLPEKKGEEEEPVGEVSGASDREHFGQALETEQGCLQWVPGPLALTPGAFIKEEEDEHCPIEFGDLKPSSCKVGSTPWNYLLGLYKQLQKSAMAKAQRPAAPQLALKDGLPHEEKGEREEAVDESCPKWCAPRASSDESCPKWCAPRASTYQSPLQKKFRSTDTVGFVESELKKILSVQREARLWKVGNPEGRELLTQPDITLEEAGMVDGQHLLLEEMDEMGNWPPPD.

Disordered stretches follow at residues 26 to 114 (VGSK…QTLT) and 240 to 263 (PAAPQLALKDGLPHEEKGEREEAV). Residues 31 to 49 (GSKSTNKPLTRSQPSSSWE) are compositionally biased toward polar residues. Positions 225-370 (LYKQLQKSAM…DEMGNWPPPD (146 aa)) are required for induction of mitochondrial fragmentation. Residues 250–260 (GLPHEEKGERE) are compositionally biased toward basic and acidic residues. The interaction with GGN stretch occupies residues 298–370 (KKFRSTDTVG…DEMGNWPPPD (73 aa)).

Interacts with CCDC159. Interacts with isoform 1 and isoform 2 of GGN. Testis-specific. In the testis, expressed only in germ cells and not in somatic cells. Expression starts in late primary spermatocytes in stage X-XII tubules and gradually increases towards step 1-3 spermatids in stage I-III tubules. Expression then declines continuously and disappears after step 7 spermatids in stage VII tubules (at protein level).

The protein localises to the cytoplasm. The protein resides in the membrane. Its subcellular location is the golgi apparatus. It is found in the mitochondrion intermembrane space. Induces mitochondrial fragmentation, possibly by promoting DNM1L-dependent fission and may play a role in mitochondrial morphogenesis during spermatogenesis. This chain is Gametogenetin-binding protein 1 (Ggnbp1), found in Mus musculus (Mouse).